We begin with the raw amino-acid sequence, 429 residues long: Bifunctional protein GlmU (429 aa).

The pyrophosphorylase stretch occupies residues 1-223 (MKTSILILAA…EDEFMGINDK (223 aa)). UDP-N-acetyl-alpha-D-glucosamine-binding positions include 8-11 (LAAG), K22, and 81-82 (GT). D102 is a binding site for Mg(2+). G135, E149, N164, and N221 together coordinate UDP-N-acetyl-alpha-D-glucosamine. Mg(2+) is bound at residue N221. Residues 224–244 (FELSIAENFMQKKIKKYWMQQ) form a linker region. The tract at residues 245–429 (GVIFHLPQST…KDYYYKKFQK (185 aa)) is N-acetyltransferase. UDP-N-acetyl-alpha-D-glucosamine is bound by residues R308 and K325. H336 acts as the Proton acceptor in catalysis. The UDP-N-acetyl-alpha-D-glucosamine site is built by Y339 and N350. Acetyl-CoA contacts are provided by residues 359-360 (NY), S378, A396, and R413.

The protein in the N-terminal section; belongs to the N-acetylglucosamine-1-phosphate uridyltransferase family. This sequence in the C-terminal section; belongs to the transferase hexapeptide repeat family. Homotrimer. It depends on Mg(2+) as a cofactor.

The protein localises to the cytoplasm. It carries out the reaction alpha-D-glucosamine 1-phosphate + acetyl-CoA = N-acetyl-alpha-D-glucosamine 1-phosphate + CoA + H(+). The enzyme catalyses N-acetyl-alpha-D-glucosamine 1-phosphate + UTP + H(+) = UDP-N-acetyl-alpha-D-glucosamine + diphosphate. It participates in nucleotide-sugar biosynthesis; UDP-N-acetyl-alpha-D-glucosamine biosynthesis; N-acetyl-alpha-D-glucosamine 1-phosphate from alpha-D-glucosamine 6-phosphate (route II): step 2/2. The protein operates within nucleotide-sugar biosynthesis; UDP-N-acetyl-alpha-D-glucosamine biosynthesis; UDP-N-acetyl-alpha-D-glucosamine from N-acetyl-alpha-D-glucosamine 1-phosphate: step 1/1. Its pathway is bacterial outer membrane biogenesis; LPS lipid A biosynthesis. Functionally, catalyzes the last two sequential reactions in the de novo biosynthetic pathway for UDP-N-acetylglucosamine (UDP-GlcNAc). The C-terminal domain catalyzes the transfer of acetyl group from acetyl coenzyme A to glucosamine-1-phosphate (GlcN-1-P) to produce N-acetylglucosamine-1-phosphate (GlcNAc-1-P), which is converted into UDP-GlcNAc by the transfer of uridine 5-monophosphate (from uridine 5-triphosphate), a reaction catalyzed by the N-terminal domain. The protein is Bifunctional protein GlmU of Campylobacter jejuni subsp. jejuni serotype O:2 (strain ATCC 700819 / NCTC 11168).